The chain runs to 447 residues: Cysteine--tRNA ligase (447 aa).

Cys-28 is a Zn(2+) binding site. The 'HIGH' region signature appears at Pro-30–Asn-40. Residues Cys-211, His-236, and Glu-240 each contribute to the Zn(2+) site. The 'KMSKS' region signature appears at Lys-268–Ser-272. Position 271 (Lys-271) interacts with ATP.

Belongs to the class-I aminoacyl-tRNA synthetase family. In terms of assembly, monomer. Zn(2+) serves as cofactor.

It localises to the cytoplasm. The enzyme catalyses tRNA(Cys) + L-cysteine + ATP = L-cysteinyl-tRNA(Cys) + AMP + diphosphate. In Streptococcus pyogenes serotype M1, this protein is Cysteine--tRNA ligase.